Here is a 357-residue protein sequence, read N- to C-terminus: 3'-hydroxy-N-methyl-(S)-coclaurine 4'-O-methyltransferase 2 (357 aa).

Residue aspartate 226 participates in S-adenosyl-L-methionine binding. Histidine 264 acts as the Proton acceptor in catalysis.

The protein belongs to the class I-like SAM-binding methyltransferase superfamily. Cation-independent O-methyltransferase family. COMT subfamily. In terms of assembly, homodimer. As to expression, expressed in roots, stems, leaves and flowers.

It carries out the reaction (S)-3'-hydroxy-N-methylcoclaurine + S-adenosyl-L-methionine = (S)-reticuline + S-adenosyl-L-homocysteine + H(+). It participates in alkaloid biosynthesis; (S)-reticuline biosynthesis; (S)-reticuline from (S)-norcoclaurine: step 4/4. In terms of biological role, involved in the biosynthesis of benzylisoquinoline alkaloids. Catalyzes the transfer of the methyl group to the 4'-hydroxyl group of 3'-hydroxy-N-methylcoclaurine to form reticuline. Can also use laudanosoline and, with a lower activity, 6-O-methylnorlaudanosoline and norlaudanosoline as substrates. Also involved in the papaverine biosynthesis. In Papaver somniferum (Opium poppy), this protein is 3'-hydroxy-N-methyl-(S)-coclaurine 4'-O-methyltransferase 2.